A 595-amino-acid chain; its full sequence is TNF receptor-associated factor family protein DDB_G0272348 (595 aa).

The tract at residues 14–64 is disordered; the sequence is SFTNNNSNNNNNNNNNSNSNNNNNNNNNNINNNNNHNNNNKNNSNNKNEIN. The span at 17-64 shows a compositional bias: low complexity; sequence NNNSNNNNNNNNNSNSNNNNNNNNNNINNNNNHNNNNKNNSNNKNEIN. The segment at 87 to 134 adopts an RING-type; degenerate zinc-finger fold; sequence CTICSDLLVNSFHADKFKAVQCKNGHYTTCLNCWEKHLEKKKNCIQCG. 2 consecutive TRAF-type zinc fingers follow at residues 189-253 and 254-311; these read EHLK…INKE and SHNA…SKLS. Positions 348–410 form a coiled coil; it reads LLNGQNKKIT…QQQQSQQQQQ (63 aa). Residues 409 to 440 show a composition bias toward low complexity; it reads QQSQQQQQSQQSQQNNNSNSHFINNNNNNINN. Residues 409–450 form a disordered region; sequence QQSQQQQQSQQSQQNNNSNSHFINNNNNNINNVQMSDSPNGG. The segment covering 441 to 450 has biased composition (polar residues); it reads VQMSDSPNGG. In terms of domain architecture, MATH spans 456-584; it reads VYKNKWVISN…NDSITIEIEI (129 aa).

Belongs to the TNF receptor-associated factor family. A subfamily.

Its subcellular location is the cytoplasm. In terms of biological role, probable adapter protein and signal transducer that links members of the tumor necrosis factor receptor family to different signaling pathways by association with the receptor cytoplasmic domain and kinases. This is TNF receptor-associated factor family protein DDB_G0272348 from Dictyostelium discoideum (Social amoeba).